The sequence spans 30 residues: Toxic protein AapA1 (30 aa).

Belongs to the AapA toxin family.

Its subcellular location is the cell inner membrane. Transcription of the aapA1 gene generates a full-length transcript whose folding impedes translation. Processing of the 3' end of the aapA1 message generates a shorter transcript that becomes translatable after a structural rearrangement. The processing also makes it more susceptible to forming dsRNA with IsoA1 which leads to duplex RNA degradation by RNase 3 (rnc). In terms of biological role, may be involved in response to oxidative stress. Toxic component of a type I toxin-antitoxin (TA) system. When overexpression is induced in situ in the absence of its cognate antisense RNA antitoxin IsoA1 it leads to cell growth arrest and cell death without lysis. Neutralized by IsoA1 RNA which forms an extensive duplex with the mRNA. Binds artificial prokaryotic and eukaryotic lipid membranes, with 30-fold higher affinity for prokaryotic membranes. Molecular dynamics suggests the peptide penetrates the membrane leading to lipid reorganization and thinning of the bilayer. Induction of toxin in the absence of antitoxin RNA causes a fast conversion of cells from spiral-shaped to coccoid forms; cells have no visible membrane defects and resemble wild-type 'aging coccoids'. Toxin causes a moderate decrease in membrane potential and ATP content and alterations in peptidoglycan muropeptide abundance; GlcNAc-MurNAc dipeptides increase while GlcNAc-MurNAc tripeptides decrease (i.e. a faster phenocopy of cell aging). Deletion of all 6 AapA/IsoA TA loci in strain B128 leads to slower than wild-type conversion of H2O2-treated cells to the coccoid form. This suggests oxidative stress triggers coccoid transformation via these type I TA systems, although other factors eventually drive the morphology change. This Helicobacter pylori (strain ATCC 700392 / 26695) (Campylobacter pylori) protein is Toxic protein AapA1.